We begin with the raw amino-acid sequence, 185 residues long: Ribosome-recycling factor (185 aa).

The protein belongs to the RRF family.

Its subcellular location is the cytoplasm. Responsible for the release of ribosomes from messenger RNA at the termination of protein biosynthesis. May increase the efficiency of translation by recycling ribosomes from one round of translation to another. This Shewanella oneidensis (strain ATCC 700550 / JCM 31522 / CIP 106686 / LMG 19005 / NCIMB 14063 / MR-1) protein is Ribosome-recycling factor.